A 155-amino-acid polypeptide reads, in one-letter code: Transcription antitermination protein NusB (155 aa).

It belongs to the NusB family.

Its function is as follows. Involved in transcription antitermination. Required for transcription of ribosomal RNA (rRNA) genes. Binds specifically to the boxA antiterminator sequence of the ribosomal RNA (rrn) operons. This chain is Transcription antitermination protein NusB, found in Vibrio campbellii (strain ATCC BAA-1116).